Consider the following 794-residue polypeptide: cAMP and cAMP-inhibited cGMP 3',5'-cyclic phosphodiesterase 10A (794 aa).

3',5'-cyclic AMP is bound by residues 296 to 297 (RC), 340 to 341 (IA), Thr374, Gln393, and His525. In terms of domain architecture, PDEase spans 452-769 (TSEEWQGLMH…NQWEKVIRGE (318 aa)). His525 acts as the Proton donor in catalysis. His525 contacts 3',5'-cyclic GMP. The a divalent metal cation site is built by His529, His563, Asp564, and Asp674. Gln726 contacts 3',5'-cyclic AMP. Gln726 is a binding site for 3',5'-cyclic GMP.

This sequence belongs to the cyclic nucleotide phosphodiesterase family. As to quaternary structure, homodimer. A divalent metal cation is required as a cofactor. Detected in striatum and testis (at protein level). Detected in whole brain, hippocampus, olfactory bulb, striatum neurons and testis.

It is found in the cytoplasm. It localises to the cytosol. The catalysed reaction is a nucleoside 3',5'-cyclic phosphate + H2O = a nucleoside 5'-phosphate + H(+). It catalyses the reaction 3',5'-cyclic AMP + H2O = AMP + H(+). The enzyme catalyses 3',5'-cyclic GMP + H2O = GMP + H(+). Its pathway is purine metabolism; 3',5'-cyclic AMP degradation; AMP from 3',5'-cyclic AMP: step 1/1. It participates in purine metabolism; 3',5'-cyclic GMP degradation; GMP from 3',5'-cyclic GMP: step 1/1. Its activity is regulated as follows. Inhibited by dipyridamole and moderately by IBMX, zaprinast and rolipram. Plays a role in signal transduction by regulating the intracellular concentration of cyclic nucleotides. Can hydrolyze both cAMP and cGMP, but has higher affinity for cAMP and is more efficient with cAMP as substrate. This is cAMP and cAMP-inhibited cGMP 3',5'-cyclic phosphodiesterase 10A (Pde10a) from Rattus norvegicus (Rat).